The chain runs to 467 residues: UDP-glycosyltransferase 90A2 (467 aa).

Residues Ser289, 341–343 (VDQ), 358–366 (HCGWNSLTE), and 380–383 (AAEQ) contribute to the UDP-alpha-D-glucose site.

The protein belongs to the UDP-glycosyltransferase family.

In Arabidopsis thaliana (Mouse-ear cress), this protein is UDP-glycosyltransferase 90A2 (UGT90A2).